A 340-amino-acid polypeptide reads, in one-letter code: Flap endonuclease 1 (340 aa).

The tract at residues 1–98 is N-domain; sequence MGVDLGGLVE…ETIKARAEVR (98 aa). Mg(2+) is bound by residues D27, D80, E151, E153, D172, D174, and D235. The interval 115 to 256 is I-domain; sequence EAYKYAQAST…TALKLVKKHG (142 aa). Residues 332–340 are interaction with PCNA; sequence KQKTLSSWF.

This sequence belongs to the XPG/RAD2 endonuclease family. FEN1 subfamily. As to quaternary structure, interacts with PCNA. PCNA stimulates the nuclease activity without altering cleavage specificity. It depends on Mg(2+) as a cofactor.

Structure-specific nuclease with 5'-flap endonuclease and 5'-3' exonuclease activities involved in DNA replication and repair. During DNA replication, cleaves the 5'-overhanging flap structure that is generated by displacement synthesis when DNA polymerase encounters the 5'-end of a downstream Okazaki fragment. Binds the unpaired 3'-DNA end and kinks the DNA to facilitate 5' cleavage specificity. Cleaves one nucleotide into the double-stranded DNA from the junction in flap DNA, leaving a nick for ligation. Also involved in the base excision repair (BER) pathway. Acts as a genome stabilization factor that prevents flaps from equilibrating into structures that lead to duplications and deletions. Also possesses 5'-3' exonuclease activity on nicked or gapped double-stranded DNA. In Methanocella arvoryzae (strain DSM 22066 / NBRC 105507 / MRE50), this protein is Flap endonuclease 1.